Here is a 390-residue protein sequence, read N- to C-terminus: GDSL esterase/lipase At1g28580 (390 aa).

Positions 1–28 (MAYPGSPILMKLLVFIFLSTFVVTNVSS) are cleaved as a signal peptide. Ser-44 (nucleophile) is an active-site residue. N-linked (GlcNAc...) asparagine glycosylation is found at Asn-140 and Asn-322. Active-site residues include Asp-347 and His-350.

It belongs to the 'GDSL' lipolytic enzyme family.

It is found in the secreted. This is GDSL esterase/lipase At1g28580 from Arabidopsis thaliana (Mouse-ear cress).